The chain runs to 137 residues: Holo-[acyl-carrier-protein] synthase (137 aa).

Mg(2+) contacts are provided by Asp8 and Glu61.

It belongs to the P-Pant transferase superfamily. AcpS family. Requires Mg(2+) as cofactor.

It is found in the cytoplasm. It catalyses the reaction apo-[ACP] + CoA = holo-[ACP] + adenosine 3',5'-bisphosphate + H(+). In terms of biological role, transfers the 4'-phosphopantetheine moiety from coenzyme A to a Ser of acyl-carrier-protein. This is Holo-[acyl-carrier-protein] synthase from Afipia carboxidovorans (strain ATCC 49405 / DSM 1227 / KCTC 32145 / OM5) (Oligotropha carboxidovorans).